The sequence spans 123 residues: Nitrogen fixation nifHD1 region GlnB-like protein 2 (123 aa).

The protein belongs to the P(II) protein family.

Its function is as follows. Could be involved in the regulation of nitrogen fixation. The sequence is that of Nitrogen fixation nifHD1 region GlnB-like protein 2 (glnBB) from Methanosarcina barkeri.